We begin with the raw amino-acid sequence, 209 residues long: Transmembrane protein 52 (209 aa).

Residues 1–32 form the signal peptide; it reads MARGPLAARGLRLLLPLLPLLPLLPLPQVALG. The helical transmembrane segment at 56–76 threads the bilayer; it reads VGLILLAVLLLLLCGVTAGCV. Residues 145 to 209 are disordered; the sequence is AYSLYTPEPP…QLPPCSPGAP (65 aa). Positions 159-170 are enriched in basic and acidic residues; sequence EAVKMAKPREEG. Polar residues predominate over residues 186 to 202; that stretch reads LETTPVPQESGPNTQLP.

The protein localises to the membrane. The chain is Transmembrane protein 52 (TMEM52) from Homo sapiens (Human).